The chain runs to 175 residues: Regenerating islet-derived protein 3-alpha (175 aa).

A signal peptide spans 1 to 26; sequence MLPPMALPSVSWMLLSCLMLLSQVQG. Residues 27-37 constitute a propeptide that is removed on maturation; the sequence is EEPQRELPSAR. 3 disulfides stabilise this stretch: cysteine 40–cysteine 51, cysteine 68–cysteine 171, and cysteine 146–cysteine 163. The C-type lectin domain maps to 47–172; that stretch reads YGSHCYALFL…CNVRLPYVCK (126 aa). Residues histidine 50 and histidine 107 each coordinate Zn(2+). Positions 103 to 118 are sufficient to activate EXTL3; that stretch reads WIGLHDPTQGTEPNGE. The short motif at 114-116 is the EPN element; it reads EPN. Zn(2+) contacts are provided by glutamate 121 and histidine 145.

Forms a hexameric membrane-permeabilizing oligomeric pore on membrane phospholipids. The hexamer is formed by three dimers related by helical symmetry. Forms filaments, filamentation traps pore complexes and limits damage to host cells. Interacts with EXTL3. Proteolytic processing by trypsin removes an inhibitory N-terminal propeptide and is essential for peptidoglycan binding and antibacterial activity. As to expression, expressed by keratinocytes. Highly expressed in epidermal keratinocytes of psoriasis patients (at protein level). Constitutively expressed in intestine. Low expression is found in healthy pancreas. Overexpressed during the acute phase of pancreatitis and in some patients with chronic pancreatitis.

The protein resides in the secreted. With respect to regulation, lipopolysaccharide inhibits pore-forming activity, explaining why is bactericidal for Gram-positive but not Gram-negative bacteria. In terms of biological role, bactericidal C-type lectin which acts exclusively against Gram-positive bacteria and mediates bacterial killing by binding to surface-exposed carbohydrate moieties of peptidoglycan. Binds membrane phospholipids and kills bacteria by forming a hexameric membrane-permeabilizing oligomeric pore. Acts as a hormone in response to different stimuli like anti-inflammatory signals, such as IL17A, or gut microbiome. Secreted by different cell types to activate its receptor EXTL3 and induce cell specific signaling pathways. Induced by IL17A in keratinocytes, regulates keratinocyte proliferation and differentiation after skin injury via activation of EXTL3-PI3K-AKT signaling pathway. In parallel, inhibits skin inflammation through the inhibition of inflammatory cytokines such as IL6 and TNF. In pancreas, is able to permealize beta-cells membrane and stimulate their proliferation. Functionally, has bacteriostatic activity. The polypeptide is Regenerating islet-derived protein 3-alpha (Homo sapiens (Human)).